Here is a 169-residue protein sequence, read N- to C-terminus: Putative phosphoesterase SH1944 (169 aa).

The active-site Proton donor is the His34. 2 short sequence motifs (HXTX) span residues 34–37 (HITI) and 115–118 (HFTI). His115 (proton acceptor) is an active-site residue.

The protein belongs to the 2H phosphoesterase superfamily. YjcG family.

The chain is Putative phosphoesterase SH1944 from Staphylococcus haemolyticus (strain JCSC1435).